Reading from the N-terminus, the 682-residue chain is Methionine--tRNA ligase (682 aa).

A 'HIGH' region motif is present at residues 12-22 (PYANGAIHLGH). Zn(2+)-binding residues include Cys143, Cys146, Cys156, and Cys159. The 'KMSKS' region motif lies at 328-332 (KMSKS). Lys331 contacts ATP. Residues 580 to 682 (DFAKLDLRVA…EGIRPGMQVK (103 aa)) enclose the tRNA-binding domain.

It belongs to the class-I aminoacyl-tRNA synthetase family. MetG type 1 subfamily. As to quaternary structure, homodimer. The cofactor is Zn(2+).

The protein resides in the cytoplasm. It catalyses the reaction tRNA(Met) + L-methionine + ATP = L-methionyl-tRNA(Met) + AMP + diphosphate. Functionally, is required not only for elongation of protein synthesis but also for the initiation of all mRNA translation through initiator tRNA(fMet) aminoacylation. The chain is Methionine--tRNA ligase from Actinobacillus pleuropneumoniae serotype 7 (strain AP76).